The primary structure comprises 715 residues: Fatty acid oxidation complex subunit alpha (715 aa).

The segment at 1–190 (MIYEGKAITV…KVSAVDAVVT (190 aa)) is enoyl-CoA hydratase/isomerase. Asp-297 provides a ligand contact to substrate. A 3-hydroxyacyl-CoA dehydrogenase region spans residues 312–715 (KDVKQAAVLG…MAKNGQSFFG (404 aa)). NAD(+)-binding positions include Met-325, Asp-344, 401-403 (VVE), Lys-408, and Ser-430. His-451 (for 3-hydroxyacyl-CoA dehydrogenase activity) is an active-site residue. Asn-454 serves as a coordination point for NAD(+). Positions 501 and 660 each coordinate substrate.

It in the N-terminal section; belongs to the enoyl-CoA hydratase/isomerase family. In the C-terminal section; belongs to the 3-hydroxyacyl-CoA dehydrogenase family. In terms of assembly, heterotetramer of two alpha chains (FadB) and two beta chains (FadA).

The catalysed reaction is a (3S)-3-hydroxyacyl-CoA + NAD(+) = a 3-oxoacyl-CoA + NADH + H(+). It carries out the reaction a (3S)-3-hydroxyacyl-CoA = a (2E)-enoyl-CoA + H2O. The enzyme catalyses a 4-saturated-(3S)-3-hydroxyacyl-CoA = a (3E)-enoyl-CoA + H2O. It catalyses the reaction (3S)-3-hydroxybutanoyl-CoA = (3R)-3-hydroxybutanoyl-CoA. The catalysed reaction is a (3Z)-enoyl-CoA = a 4-saturated (2E)-enoyl-CoA. It carries out the reaction a (3E)-enoyl-CoA = a 4-saturated (2E)-enoyl-CoA. It participates in lipid metabolism; fatty acid beta-oxidation. Its function is as follows. Involved in the aerobic and anaerobic degradation of long-chain fatty acids via beta-oxidation cycle. Catalyzes the formation of 3-oxoacyl-CoA from enoyl-CoA via L-3-hydroxyacyl-CoA. It can also use D-3-hydroxyacyl-CoA and cis-3-enoyl-CoA as substrate. This chain is Fatty acid oxidation complex subunit alpha, found in Pseudomonas fragi.